Here is a 262-residue protein sequence, read N- to C-terminus: Virulence plasmid protein pGP6-D-related protein (262 aa).

Belongs to the UPF0137 (pGP6-D) family.

The chain is Virulence plasmid protein pGP6-D-related protein from Chlamydia muridarum (strain MoPn / Nigg).